The sequence spans 677 residues: Methionine--tRNA ligase (677 aa).

Residues 15-25 carry the 'HIGH' region motif; that stretch reads PYANGPIHIGH. C146, C149, C159, and C162 together coordinate Zn(2+). A 'KMSKS' region motif is present at residues 332 to 336; the sequence is KMSKS. An ATP-binding site is contributed by K335. The 102-residue stretch at 576–677 folds into the tRNA-binding domain; the sequence is DFAKVDLRVA…DGAKPGMRIM (102 aa).

Belongs to the class-I aminoacyl-tRNA synthetase family. MetG type 1 subfamily. As to quaternary structure, homodimer. The cofactor is Zn(2+).

The protein localises to the cytoplasm. The enzyme catalyses tRNA(Met) + L-methionine + ATP = L-methionyl-tRNA(Met) + AMP + diphosphate. Functionally, is required not only for elongation of protein synthesis but also for the initiation of all mRNA translation through initiator tRNA(fMet) aminoacylation. The protein is Methionine--tRNA ligase of Idiomarina loihiensis (strain ATCC BAA-735 / DSM 15497 / L2-TR).